Here is a 284-residue protein sequence, read N- to C-terminus: MTKDYQDFQHLDNENDHHQLQRGPPPAPRLLQRLCSGFRLFLLSLGLSILLLVVVCVITSQNSQLREDLRVLRQNFSNFTVSTEDQVKALTTQGERVGRKMKLVESQLEKHQEDLREDHSRLLLHVKQLVSDVRSLSCQMAALRGNGSERICCPINWVEYEGSCYWFSSSVKPWTEADKYCQLENAHLVVVTSWEEQRFVQQHMGPLNTWIGLTDQNGPWKWVDGTDYETGFKNWRPGQPDDWYGHGLGGGEDCAHFTTDGHWNDDVCRRPYRWVCETELGKAN.

Residues 1 to 39 (MTKDYQDFQHLDNENDHHQLQRGPPPAPRLLQRLCSGFR) lie on the Cytoplasmic side of the membrane. The Endocytosis signal motif lies at 5–8 (YQDF). The S-palmitoyl cysteine moiety is linked to residue Cys-35. Residues 40 to 60 (LFLLSLGLSILLLVVVCVITS) form a helical; Signal-anchor for type II membrane protein membrane-spanning segment. The stretch at 58-122 (ITSQNSQLRE…EDLREDHSRL (65 aa)) forms a coiled coil. Residues 61–284 (QNSQLREDLR…VCETELGKAN (224 aa)) lie on the Extracellular side of the membrane. N-linked (GlcNAc...) asparagine glycosylation is found at Asn-75, Asn-78, and Asn-146. Disulfide bonds link Cys-153-Cys-164, Cys-181-Cys-276, and Cys-254-Cys-268. The 118-residue stretch at 160 to 277 (YEGSCYWFSS…CRRPYRWVCE (118 aa)) folds into the C-type lectin domain. Residues Val-190, Glu-196, Asp-215, Gln-239, Asp-241, Asp-242, Glu-252, Asp-253, Asn-264, Asp-265, and Glu-277 each coordinate Ca(2+).

As to quaternary structure, interacts with LASS2. Phosphorylated on a cytoplasmic Ser residue. Expressed exclusively in hepatic parenchymal cells.

Its subcellular location is the membrane. Mediates the endocytosis of plasma glycoproteins to which the terminal sialic acid residue on their complex carbohydrate moieties has been removed. The receptor recognizes terminal galactose and N-acetylgalactosamine units. After ligand binding to the receptor, the resulting complex is internalized and transported to a sorting organelle, where receptor and ligand are disassociated. The receptor then returns to the cell membrane surface. This is Asialoglycoprotein receptor 1 (Asgr1) from Rattus norvegicus (Rat).